The following is a 136-amino-acid chain: Large ribosomal subunit protein uL16 (136 aa).

This sequence belongs to the universal ribosomal protein uL16 family. In terms of assembly, part of the 50S ribosomal subunit.

In terms of biological role, binds 23S rRNA and is also seen to make contacts with the A and possibly P site tRNAs. The chain is Large ribosomal subunit protein uL16 from Alteromonas mediterranea (strain DSM 17117 / CIP 110805 / LMG 28347 / Deep ecotype).